The chain runs to 98 residues: Citrate lyase acyl carrier protein (98 aa).

Ser-14 is modified (O-(phosphoribosyl dephospho-coenzyme A)serine).

This sequence belongs to the CitD family. Oligomer with a subunit composition of (alpha,beta,gamma)6.

Its subcellular location is the cytoplasm. In terms of biological role, covalent carrier of the coenzyme of citrate lyase. This Vibrio cholerae serotype O1 (strain ATCC 39315 / El Tor Inaba N16961) protein is Citrate lyase acyl carrier protein.